We begin with the raw amino-acid sequence, 1373 residues long: Disease resistance protein RRS1 (1373 aa).

A TIR domain is found at 5-146 (EKDEEFVCIS…EIVRDVYETH (142 aa)). Positions 170–421 (IGIRCVGIWG…LLEGCGFFPH (252 aa)) constitute an NB-ARC domain. 179–186 (GMPGIGKT) is a binding site for ATP. 9 LRR repeats span residues 498-522 (SEEI…AFKN), 535-553 (NPEV…HSLP), 554-575 (NELR…NFDP), 577-598 (HLVE…TKNL), 621-646 (AENL…RLLR), 665-688 (PPNI…TVKP), 742-766 (LPNM…SIQG), 768-793 (PRFL…SLEI), and 831-854 (PRNL…PLSL). Positions 988 to 1005 (RNFHCWAPGKVVPKVRKD) match the Nuclear localization signal motif. Positions 1204-1272 (IPAIDEGDLW…YLSEHNHPRP (69 aa)) form a DNA-binding region, WRKY. Residues 1300–1323 (RVFQNKDEPNKPHLPSSSTPPGNA) form a disordered region.

As to quaternary structure, interacts with PopP2, a R.solanacearum type III effector.

Its subcellular location is the nucleus. Its function is as follows. Transcription factor. Interacts specifically with the W box (5'-(T)TGAC[CT]-3'), a frequently occurring elicitor-responsive cis-acting element. Also acts as a disease resistance protein involved in resistance to fungal and bacterial pathogens, including R.solanacearum, P.syringae pv. tomato and C.higginsianum. This chain is Disease resistance protein RRS1, found in Arabidopsis thaliana (Mouse-ear cress).